The chain runs to 321 residues: MKKIMITGALGQIGTELVVKCREIYGTDNVLATDIREPEADSPVQNGPFEILDVTDRDRMFELVRDFEADSLMHMAALLSATAEKNPILAWDLNMGGLMNALEAARTYNLHFFTPSSIGAFGDSTPKVNTPQVTIQQPTTMYGVNKVAGELLCQYYFKRFGVDTRSVRFPGLISHVKEPGGGTTDYAVEIYFKAVREGHYTSFIDKGTYMDMMYMDDAIEAIIKLMEADDAKLETRNGYNLSAMSFDPEMVKEAIQEYYPNFTLDYDVDPIRQGIANSWPDSIDTSCSRGEWGFDPKYDLASMTKLMLEAIEQKDTVKNNN.

Belongs to the NAD(P)-dependent epimerase/dehydratase family.

This is an uncharacterized protein from Staphylococcus aureus (strain COL).